Here is a 129-residue protein sequence, read N- to C-terminus: UPF0325 protein Spro_3794 (129 aa).

It belongs to the UPF0325 family.

This chain is UPF0325 protein Spro_3794, found in Serratia proteamaculans (strain 568).